Here is a 211-residue protein sequence, read N- to C-terminus: Ribosomal RNA small subunit methyltransferase G (211 aa).

Residues glycine 81, leucine 86, 132 to 133, and arginine 147 contribute to the S-adenosyl-L-methionine site; that span reads VE.

The protein belongs to the methyltransferase superfamily. RNA methyltransferase RsmG family.

It localises to the cytoplasm. It carries out the reaction guanosine(527) in 16S rRNA + S-adenosyl-L-methionine = N(7)-methylguanosine(527) in 16S rRNA + S-adenosyl-L-homocysteine. Its function is as follows. Specifically methylates the N7 position of guanine in position 527 of 16S rRNA. This Actinobacillus succinogenes (strain ATCC 55618 / DSM 22257 / CCUG 43843 / 130Z) protein is Ribosomal RNA small subunit methyltransferase G.